Here is a 258-residue protein sequence, read N- to C-terminus: MAKRLDLKDVNIYYGAFHAVADVSLAVQPRSVTAFIGPSGCGKSTVLRTLNRMHEVIPGARVEGSVLLDGEDIYGPGVDPVGVRKTIGMVFQRPNPFPTMSIRDNVVAGLKLQGVRNKKTLDEVAERSLRGANLWNEVKDRLDKPGGGLSGGQQQRLCIARAIAVQPDVLLMDEPCSALDPISTLAIEDLIATLKLDYTIVIVTHNMQQAARVSDQTAFFNLEATGKPGRLIEIDDTEKIFSNPRQKATEDYISGRFG.

Positions 5–247 (LDLKDVNIYY…EKIFSNPRQK (243 aa)) constitute an ABC transporter domain. 37-44 (GPSGCGKS) serves as a coordination point for ATP.

This sequence belongs to the ABC transporter superfamily. Phosphate importer (TC 3.A.1.7) family. As to quaternary structure, the complex is composed of two ATP-binding proteins (PstB), two transmembrane proteins (PstC and PstA) and a solute-binding protein (PstS).

The protein localises to the cell membrane. The catalysed reaction is phosphate(out) + ATP + H2O = ADP + 2 phosphate(in) + H(+). In terms of biological role, part of the ABC transporter complex PstSACB involved in phosphate import. Responsible for energy coupling to the transport system. The chain is Phosphate import ATP-binding protein PstB from Mycolicibacterium smegmatis (Mycobacterium smegmatis).